The following is a 627-amino-acid chain: MGNLLNSIHSPADIKHFSVPQLEALAQEIRDRLIQSVARTGGHIGPNLGVVELTIAMHYVFDTPQDRFVFDVSHQAYVHKLLTGRANRFDTLRQPGGLNGFMLRSESQHDSYGAGHAGTALSAALGMAVARDIAGGHEHVVALAGDAAFTNGISFEALNNIADQTRRLIVVLNDNEWSIDRNVGAIARYLHKIVTNEHVSQFHDSAARLLKRIGGPAAANMVRRAEEAAKGMLWPSVLFEEFGLTYYGPIDGHNLSLLIDTFKFLKQQDRPVLLHAITQKGRGFEPALAGQKKFHGLGPFDPETGETSSSGQPTYSEVFARSLVKLADQNDKVVAITAAMPNGTGLDHFRPHHPARYFDVGIAEEHAVIFAAGMATRGFKPYCAIYSTFLQRAFDPIVHDVCLQNLPVVFCMDRGGLSGDDGPTHHGLFDISYLRGIPNIVHMVPADEDELADMMYTAMLHDGPSAIRYPRGTGPGHAVKQQPEALPIGKAKVLHEGEDIAILGLGALLPMAEQIREELARQGYRAAVINPRFVKPVDTELLAHYADRVTAFLTLEDHVLMGGFGSAVMEELNALGKSTPVVRIGWPDRFIEHGKVDQLRARYGISVEAAMEKLAPYLTRSAPLSVR.

Thiamine diphosphate is bound by residues His-74 and 115–117; that span reads GHA. Position 146 (Asp-146) interacts with Mg(2+). Thiamine diphosphate contacts are provided by residues 147–148, Asn-175, Phe-284, and Glu-364; that span reads AA. Asn-175 contacts Mg(2+).

Belongs to the transketolase family. DXPS subfamily. Homodimer. It depends on Mg(2+) as a cofactor. Thiamine diphosphate serves as cofactor.

It catalyses the reaction D-glyceraldehyde 3-phosphate + pyruvate + H(+) = 1-deoxy-D-xylulose 5-phosphate + CO2. The protein operates within metabolic intermediate biosynthesis; 1-deoxy-D-xylulose 5-phosphate biosynthesis; 1-deoxy-D-xylulose 5-phosphate from D-glyceraldehyde 3-phosphate and pyruvate: step 1/1. Catalyzes the acyloin condensation reaction between C atoms 2 and 3 of pyruvate and glyceraldehyde 3-phosphate to yield 1-deoxy-D-xylulose-5-phosphate (DXP). The sequence is that of 1-deoxy-D-xylulose-5-phosphate synthase from Acidobacterium capsulatum (strain ATCC 51196 / DSM 11244 / BCRC 80197 / JCM 7670 / NBRC 15755 / NCIMB 13165 / 161).